Consider the following 95-residue polypeptide: Small ribosomal subunit protein uS19 (95 aa).

Positions 76 to 95 are disordered; the sequence is PTRRFGGHADKKAKKGELKK. Residues 82–95 are compositionally biased toward basic and acidic residues; the sequence is GHADKKAKKGELKK.

Belongs to the universal ribosomal protein uS19 family.

Functionally, protein S19 forms a complex with S13 that binds strongly to the 16S ribosomal RNA. This Thermotoga maritima (strain ATCC 43589 / DSM 3109 / JCM 10099 / NBRC 100826 / MSB8) protein is Small ribosomal subunit protein uS19 (rpsS).